The chain runs to 818 residues: Protein LDB19 (818 aa).

The segment at 1 to 25 (MAFSRLTSTHQSNHNGYSNSNKKGQ) is disordered. Thr93 is modified (phosphothreonine). Basic and acidic residues predominate over residues 352–361 (QVKIKESEKS). The disordered stretch occupies residues 352-374 (QVKIKESEKSKKPRSHIKRYGEL). Ser384 is modified (phosphoserine). The interval 388–436 (MPSQRLPGEPGREQAPNSSGPASTGNVGLDDENPVNEDEEDQPGSEFIH) is disordered. Residues 402 to 413 (APNSSGPASTGN) show a composition bias toward polar residues. Residues 416 to 430 (LDDENPVNEDEEDQP) are compositionally biased toward acidic residues. Lys486 is covalently cross-linked (Glycyl lysine isopeptide (Lys-Gly) (interchain with G-Cter in ubiquitin)). Disordered regions lie at residues 568–590 (QPIR…NVHN) and 607–644 (TPKV…NSNI). At Thr619 the chain carries Phosphothreonine. Over residues 620–629 (PVNSNKSNHS) the composition is skewed to polar residues. Phosphoserine is present on Ser808.

Belongs to the LDB19 family.

The protein resides in the cytoplasm. Its subcellular location is the golgi apparatus. Functionally, may be involved in protein-linked oligosaccharide phosphorylation since the deletion reduces the negative charge of the cell surface. Involved in the resistance to EDTA, cadmium chloride, cycloheximide, 6-dimethylaminopurine, methyl caffeate, beta-chloro-L-alanine, caffeine and cerulenin. In Saccharomyces cerevisiae (strain ATCC 204508 / S288c) (Baker's yeast), this protein is Protein LDB19 (LDB19).